A 276-amino-acid chain; its full sequence is NADPH-dependent 7-cyano-7-deazaguanine reductase (276 aa).

83–85 (IES) is a substrate binding site. 85–86 (SK) provides a ligand contact to NADPH. Catalysis depends on C184, which acts as the Thioimide intermediate. D191 serves as the catalytic Proton donor. Position 223 to 224 (223 to 224 (HE)) interacts with substrate. NADPH is bound at residue 252 to 253 (RG).

This sequence belongs to the GTP cyclohydrolase I family. QueF type 2 subfamily. Homodimer.

The protein resides in the cytoplasm. The catalysed reaction is 7-aminomethyl-7-carbaguanine + 2 NADP(+) = 7-cyano-7-deazaguanine + 2 NADPH + 3 H(+). It functions in the pathway tRNA modification; tRNA-queuosine biosynthesis. Functionally, catalyzes the NADPH-dependent reduction of 7-cyano-7-deazaguanine (preQ0) to 7-aminomethyl-7-deazaguanine (preQ1). This is NADPH-dependent 7-cyano-7-deazaguanine reductase from Pseudomonas putida (strain ATCC 47054 / DSM 6125 / CFBP 8728 / NCIMB 11950 / KT2440).